The sequence spans 750 residues: Circadian input-output histidine kinase CikA (750 aa).

The tract at residues 1-173 is N-terminal domain; that stretch reads MLPAFSPIFR…QVIAQIRQSL (173 aa). The interval 174-333 is GAF domain; the sequence is DLSEILNNAV…KNFLGQIGEH (160 aa). In terms of domain architecture, Histidine kinase spans 385 to 609; that stretch reads NISHELRTPL…IFTTVIPQQN (225 aa). Histidine 388 carries the phosphohistidine; by autocatalysis modification. Residues 604-750 are psR domain, bind KaiB(fs); that stretch reads VIPQQNFPPT…VQSIQQEPLR (147 aa). The Response regulatory domain occupies 631-745; that stretch reads SVIVIEQDEE…LLLQRVQSIQ (115 aa). Position 680 is a 4-aspartylphosphate (aspartate 680).

The protein in the N-terminal section; belongs to the phytochrome family. Homodimer. Part of the circadian clock (KaiA, KaiB, KaiC, CikA, RpaA, SasA), the composition of which varies during the circadian cycle. KaiA and CikA compete for binding to KaiB(fs). Interacts with RpaA.

It carries out the reaction ATP + protein L-histidine = ADP + protein N-phospho-L-histidine.. Its function is as follows. Functions in an input pathway to the Kai circadian clock. Senses oxidized quinones via its C-terminal pseudo-receiver domain, providing a link between cell metabolism and the clock. Affects the ratio of phosphorylated to unphosphorylated KaiC, binds quinones via its pseudo-receptor domain. Quinone-binding destabilizes the protein rapidly. Autophosphorylates, does not transfer the phosphate to its pseudo-receiver (PsR) domain. May play a role in cell division. In terms of biological role, also functions in a two-component CikA/RpaA output pathway from the circadian clock, negatively regulating kaiBC expression independently of labA and of sasA. One of three clock output pathways. Dephosphorylates phospho-RpaA, enhanced by KaiB and KaiC, has only modest kinase activity on RpaA. The protein is Circadian input-output histidine kinase CikA of Synechocystis sp. (strain ATCC 27184 / PCC 6803 / Kazusa).